The primary structure comprises 258 residues: L-aspartate dehydrogenase 1 (258 aa).

Residues A121 and N181 each coordinate NAD(+). The active site involves H211.

The protein belongs to the L-aspartate dehydrogenase family.

It catalyses the reaction L-aspartate + NADP(+) + H2O = oxaloacetate + NH4(+) + NADPH + H(+). The enzyme catalyses L-aspartate + NAD(+) + H2O = oxaloacetate + NH4(+) + NADH + H(+). The protein operates within cofactor biosynthesis; NAD(+) biosynthesis; iminoaspartate from L-aspartate (dehydrogenase route): step 1/1. Functionally, specifically catalyzes the NAD or NADP-dependent dehydrogenation of L-aspartate to iminoaspartate. The chain is L-aspartate dehydrogenase 1 from Bordetella parapertussis (strain 12822 / ATCC BAA-587 / NCTC 13253).